We begin with the raw amino-acid sequence, 187 residues long: MSINPLASKIAAPYARALFDFSVDQNLMHQITADFQNLEVFLNKTPDLTEYLSNPLISAKSKEEVLNKTLKSQINKETFKFLIVLVNRSRINLLEPIIASYLNLVYNAASVKMIEVSTAYAFTNLQKNTLIKKLKELTNAREIRLVITVDSSLIGGFLIKTNSKVLDFTIKNQLQKLAKHLDSVLEI.

It belongs to the ATPase delta chain family. As to quaternary structure, F-type ATPases have 2 components, F(1) - the catalytic core - and F(0) - the membrane proton channel. F(1) has five subunits: alpha(3), beta(3), gamma(1), delta(1), epsilon(1). CF(0) has four main subunits: a(1), b(1), b'(1) and c(10-14). The alpha and beta chains form an alternating ring which encloses part of the gamma chain. F(1) is attached to F(0) by a central stalk formed by the gamma and epsilon chains, while a peripheral stalk is formed by the delta, b and b' chains.

The protein localises to the plastid. Its subcellular location is the chloroplast thylakoid membrane. Functionally, f(1)F(0) ATP synthase produces ATP from ADP in the presence of a proton or sodium gradient. F-type ATPases consist of two structural domains, F(1) containing the extramembraneous catalytic core and F(0) containing the membrane proton channel, linked together by a central stalk and a peripheral stalk. During catalysis, ATP synthesis in the catalytic domain of F(1) is coupled via a rotary mechanism of the central stalk subunits to proton translocation. This protein is part of the stalk that links CF(0) to CF(1). It either transmits conformational changes from CF(0) to CF(1) or is implicated in proton conduction. This is ATP synthase subunit delta, chloroplastic from Trieres chinensis (Marine centric diatom).